The sequence spans 408 residues: Prenyltransferase criF (408 aa).

Dimethylallyl diphosphate contacts are provided by Arg-94, Lys-181, Tyr-183, Arg-248, Lys-250, Tyr-252, Gln-334, Tyr-336, Tyr-400, and Tyr-404.

Belongs to the tryptophan dimethylallyltransferase family. In terms of assembly, homodimer.

The enzyme catalyses preechinulin + dimethylallyl diphosphate = tardioxopiperazine B + diphosphate. It carries out the reaction preechinulin + dimethylallyl diphosphate = tardioxopiperazine A + diphosphate. It catalyses the reaction tardioxopiperazine A + dimethylallyl diphosphate = echinulin + diphosphate. The catalysed reaction is tardioxopiperazine A + dimethylallyl diphosphate = variecolorin L + diphosphate. The enzyme catalyses neoechinulin A + dimethylallyl diphosphate = variecolorin G + diphosphate. It carries out the reaction neoechinulin A + dimethylallyl diphosphate = isoechinulin A + diphosphate. It catalyses the reaction isoechinulin A + dimethylallyl diphosphate = dehydroechinulin + diphosphate. The catalysed reaction is neoechinulin B + dimethylallyl diphosphate = isoechinulin B + diphosphate. Its pathway is secondary metabolite biosynthesis. The protein operates within alkaloid biosynthesis. Its function is as follows. Prenyltransferase; part of the gene cluster that mediates the biosynthesis of echinulin family alkaloid. The pathway begins with the biosynthesis of the cyclic dipeptide cyclo-L-Trp-L-Ala (cyclo-TA) by the NRPS criC via condensation of L-alanine and L-tryptophan. The prenyltransferase criA then catalyzes the first prenylation step, a reverse prenylation reaction at C2, to yield preechinulin. Preechinulin is the substrate of the cytochrome P450 monooxygenase criE that catalyzes the formation of the double bond between C10 and C11 to produce neoechulin A. The unique prenyltransferase criF functions as a competitive enzyme with criE for preechinulin metabolization and uses preechinulin for effective regiospecific prenylations. Preechinulin is prenylated by criF at C5 or C7. C7-prenylation leads to accumulation of tardioxopiperazine B without further modification by criF. In contrast, the C5-prenylated tardioxopiperazine A can be prenylated again by criF, predominantly at C7 to form echinulin or less frequently at C4 to give variecolorin L. CriF also accepts neoechilunin A to produce varlecolorin G (prenylation at C5) or isoechinulin A (prenylation at C7). CriF further converts isoechinulin A into dehydroechinulin. Moreover, a yet unidentified enzyme can also convert neoechilunin A into neoechilunin B by introducing a double bond between positions C14 and C17 and thus provides a further substrate to criF for C5 and C7 prenylation. The polypeptide is Prenyltransferase criF (Aspergillus cristatus (Chinese Fuzhuan brick tea-fermentation fungus)).